The chain runs to 323 residues: L-lactate dehydrogenase (323 aa).

Residues Val-18, Asp-39, Tyr-69, and 83 to 84 (GA) each bind NAD(+). Substrate is bound by residues Gln-86 and Arg-92. NAD(+) is bound by residues Ser-105, 122 to 124 (VAN), and Ser-147. Substrate is bound at residue 124 to 127 (NPVD). Substrate is bound at residue 152–155 (DTGR). The active-site Proton acceptor is His-179. Tyr-223 bears the Phosphotyrosine mark. Thr-232 provides a ligand contact to substrate.

Belongs to the LDH/MDH superfamily. LDH family. As to quaternary structure, homotetramer.

Its subcellular location is the cytoplasm. The catalysed reaction is (S)-lactate + NAD(+) = pyruvate + NADH + H(+). Its pathway is fermentation; pyruvate fermentation to lactate; (S)-lactate from pyruvate: step 1/1. Its activity is regulated as follows. Under neutral conditions, the reaction is stimulated 4-fold by fructose 1,6-bisphosphate (FBP), however the L-lactate dehydrogenase is a nonallosteric enzyme. Calcium and zinc ions at 1 mM stimulate the activity almost 2-fold. Weakly inhibited by cadmium, cobalt and copper ions. In terms of biological role, catalyzes the conversion of lactate to pyruvate. The chain is L-lactate dehydrogenase from Lactobacillus helveticus (Lactobacillus suntoryeus).